A 159-amino-acid chain; its full sequence is Small ribosomal subunit protein uS9 (159 aa).

The protein belongs to the universal ribosomal protein uS9 family.

This is Small ribosomal subunit protein uS9 from Methylocella silvestris (strain DSM 15510 / CIP 108128 / LMG 27833 / NCIMB 13906 / BL2).